Consider the following 330-residue polypeptide: Glycerol-3-phosphate dehydrogenase [NAD(P)+] (330 aa).

NADPH-binding residues include Ser10, Trp11, Arg31, and Lys105. Positions 105, 135, and 137 each coordinate sn-glycerol 3-phosphate. Ala139 contributes to the NADPH binding site. Sn-glycerol 3-phosphate contacts are provided by Lys190, Asp243, Ser253, Arg254, and Asn255. Residue Lys190 is the Proton acceptor of the active site. Arg254 is a binding site for NADPH. NADPH-binding residues include Val278 and Glu280.

Belongs to the NAD-dependent glycerol-3-phosphate dehydrogenase family.

The protein localises to the cytoplasm. It catalyses the reaction sn-glycerol 3-phosphate + NAD(+) = dihydroxyacetone phosphate + NADH + H(+). The catalysed reaction is sn-glycerol 3-phosphate + NADP(+) = dihydroxyacetone phosphate + NADPH + H(+). It participates in membrane lipid metabolism; glycerophospholipid metabolism. In terms of biological role, catalyzes the reduction of the glycolytic intermediate dihydroxyacetone phosphate (DHAP) to sn-glycerol 3-phosphate (G3P), the key precursor for phospholipid synthesis. In Nitratidesulfovibrio vulgaris (strain DP4) (Desulfovibrio vulgaris), this protein is Glycerol-3-phosphate dehydrogenase [NAD(P)+].